The sequence spans 21 residues: Major outer membrane protein (21 aa).

As to quaternary structure, disulfide bond interactions within and between MOMP molecules and other components form high molecular-weight oligomers.

Its subcellular location is the cell outer membrane. In terms of biological role, structural rigidity of the outer membrane of elementary bodies and porin forming, permitting diffusion of solutes through the intracellular reticulate body membrane. The chain is Major outer membrane protein from Actinobacillus suis.